Here is a 1373-residue protein sequence, read N- to C-terminus: DNA-directed RNA polymerase subunit beta (1373 aa).

This sequence belongs to the RNA polymerase beta chain family. As to quaternary structure, the RNAP catalytic core consists of 2 alpha, 1 beta, 1 beta' and 1 omega subunit. When a sigma factor is associated with the core the holoenzyme is formed, which can initiate transcription.

It catalyses the reaction RNA(n) + a ribonucleoside 5'-triphosphate = RNA(n+1) + diphosphate. Its function is as follows. DNA-dependent RNA polymerase catalyzes the transcription of DNA into RNA using the four ribonucleoside triphosphates as substrates. This chain is DNA-directed RNA polymerase subunit beta, found in Rickettsia peacockii (strain Rustic).